We begin with the raw amino-acid sequence, 183 residues long: MNGFSTEEDSREGPPAAPAAAAPGYGQSCCLIEDGERCVRPAGNASFSKRVQKSISQKKLKLDIDKSVRHLYICDFHKNFIQSVRNKRKRKTSDDGGDSPEHDTDIPEVDLFQLQVNTLRRYKRHYKLQTRPGFNKAQLAETVSRHFRNIPVNEKETLAYFIYMVKSNKSRLDQKSEGGKQLE.

N-acetylmethionine is present on Met-1. The segment covering 1-10 (MNGFSTEEDS) has biased composition (acidic residues). The disordered stretch occupies residues 1–23 (MNGFSTEEDSREGPPAAPAAAAP). 2 cysteine pairs are disulfide-bonded: Cys-29-Cys-30 and Cys-38-Cys-74. The Atypical zinc finger occupies 29-77 (CCLIEDGERCVRPAGNASFSKRVQKSISQKKLKLDIDKSVRHLYICDFH). Residue Lys-49 forms a Glycyl lysine isopeptide (Lys-Gly) (interchain with G-Cter in SUMO2) linkage. A disordered region spans residues 85 to 105 (RNKRKRKTSDDGGDSPEHDTD). Positions 86-91 (NKRKRK) match the Nuclear localization signal (NLS) motif. The interval 88 to 90 (RKR) is important for DNA and phosphoinositide binding. Position 92 is a phosphothreonine (Thr-92). Ser-93 and Ser-99 each carry phosphoserine. The residue at position 104 (Thr-104) is a Phosphothreonine. Residues Lys-155, Lys-166, and Lys-175 each participate in a glycyl lysine isopeptide (Lys-Gly) (interchain with G-Cter in SUMO2) cross-link.

The protein belongs to the SAP30 family. As to quaternary structure, interacts with components of the histone deacetylase complex SIN3A, HDAC1 and HDAC2. Binds histones and nucleosomes. Interacts with FEZ1. Detected in brain and ovary, and at lower levels in heart, small intestine, lung, kidney, skeletal muscle, stomach and spleen (at protein level). Ubiquitous; expressed in all tissues tested with highest levels in testis.

It is found in the nucleus. It localises to the nucleolus. Functionally, functions as a transcription repressor, probably via its interaction with histone deacetylase complexes. Involved in the functional recruitment of the class 1 Sin3-histone deacetylase complex (HDAC) to the nucleolus. Binds DNA, apparently without sequence-specificity, and bends bound double-stranded DNA. Binds phosphoinositol phosphates (phosphoinositol 3-phosphate, phosphoinositol 4-phosphate and phosphoinositol 5-phosphate) via the same basic sequence motif that mediates DNA binding and nuclear import. Functions as a transcription repressor; isoform 2 has lower transcription repressor activity than isoform 1 and isoform 3. Its function is as follows. Functions as a transcription repressor; its activity is marginally lower than that of isoform 1. The polypeptide is Histone deacetylase complex subunit SAP30L (SAP30L) (Homo sapiens (Human)).